The following is a 418-amino-acid chain: NADH-quinone oxidoreductase subunit H (418 aa).

The next 9 helical transmembrane spans lie at 15–35 (LVLGKALAIFVFLMLNVLVAI), 83–103 (FVYFAAPVISTIPAFTAFAFI), 123–143 (LPVAVLFILGLSAIGVYGIVL), 164–184 (VISYEVAMGLSFAAVFLYAGS), 197–217 (VWFVFLLLPSFVIYLISMVGE), 262–282 (LATALFFGGWHAPWPLNMWAG), 287–307 (WWPVLWFTAKMWTFLFIYFWL), 321–341 (GLGWKLLIPASLVWVLIAAVI), and 349–369 (YAHWTPILVISSIVFAAALVL). The tract at residues 394 to 418 (AAHRAGFHPGIPDTAAAGESAGGRE) is disordered.

This sequence belongs to the complex I subunit 1 family. NDH-1 is composed of 14 different subunits. Subunits NuoA, H, J, K, L, M, N constitute the membrane sector of the complex.

It localises to the cell membrane. It carries out the reaction a quinone + NADH + 5 H(+)(in) = a quinol + NAD(+) + 4 H(+)(out). NDH-1 shuttles electrons from NADH, via FMN and iron-sulfur (Fe-S) centers, to quinones in the respiratory chain. The immediate electron acceptor for the enzyme in this species is believed to be menaquinone. Couples the redox reaction to proton translocation (for every two electrons transferred, four hydrogen ions are translocated across the cytoplasmic membrane), and thus conserves the redox energy in a proton gradient. This subunit may bind ubiquinone. The polypeptide is NADH-quinone oxidoreductase subunit H (Mycobacterium avium (strain 104)).